The sequence spans 153 residues: Deoxyuridine 5'-triphosphate nucleotidohydrolase (153 aa).

Substrate-binding positions include 71-73 (RSG), Asn-84, 88-90 (TID), and Lys-98.

This sequence belongs to the dUTPase family. It depends on Mg(2+) as a cofactor.

The enzyme catalyses dUTP + H2O = dUMP + diphosphate + H(+). It participates in pyrimidine metabolism; dUMP biosynthesis; dUMP from dCTP (dUTP route): step 2/2. In terms of biological role, this enzyme is involved in nucleotide metabolism: it produces dUMP, the immediate precursor of thymidine nucleotides and it decreases the intracellular concentration of dUTP so that uracil cannot be incorporated into DNA. The sequence is that of Deoxyuridine 5'-triphosphate nucleotidohydrolase from Wolbachia pipientis subsp. Culex pipiens (strain wPip).